Here is a 279-residue protein sequence, read N- to C-terminus: Dermonecrotic toxin StSicTox-betaIB1i (279 aa).

H12 is a catalytic residue. Positions 32 and 34 each coordinate Mg(2+). Residue H48 is the Nucleophile of the active site. Disulfide bonds link C52-C58 and C54-C198. D92 lines the Mg(2+) pocket.

This sequence belongs to the arthropod phospholipase D family. Class II subfamily. Class IIb sub-subfamily. Requires Mg(2+) as cofactor. As to expression, expressed by the venom gland.

The protein localises to the secreted. It carries out the reaction an N-(acyl)-sphingosylphosphocholine = an N-(acyl)-sphingosyl-1,3-cyclic phosphate + choline. The catalysed reaction is N-hexanoyl-sphing-4-enine-1-phosphocholine = N-(hexanoyl)-sphing-4-enine-1,3-cyclic phosphate + choline. The enzyme catalyses an N-(acyl)-sphingosylphosphoethanolamine = an N-(acyl)-sphingosyl-1,3-cyclic phosphate + ethanolamine. It catalyses the reaction N-dodecanoyl-heptadecasphing-4-enine-1-phosphoethanolamine = N-dodecanoyl-heptadecasphing-4-enine-1,3-cyclic phosphate + ethanolamine. It carries out the reaction a 1-acyl-sn-glycero-3-phosphoethanolamine = a 1-acyl-sn-glycero-2,3-cyclic phosphate + ethanolamine. The catalysed reaction is 1-tetradecanoyl-sn-glycero-3-phosphoethanolamine = 1-tetradecanoyl-sn-glycero-2,3-cyclic phosphate + ethanolamine. In terms of biological role, dermonecrotic toxins cleave the phosphodiester linkage between the phosphate and headgroup of certain phospholipids (sphingolipid and lysolipid substrates), forming an alcohol (often choline) and a cyclic phosphate. This toxin acts on lysophosphatidylethanolamine (LPE) and ceramide phosphoethanolamine (CPE) with high activity. This toxin acts on sphingomyelin (SM) with very low activity and is not active on lysophosphatidylserine (LPS), lysophosphatidylcholine (LPC) and lysophosphatidylglycerol (LPG). It acts by transphosphatidylation, releasing exclusively cyclic phosphate as second products. It is not surprising that spider toxins have affinity for ethanolamine-containing sphingolipids since they are common in insect prey. Induces dermonecrosis, hemolysis, increased vascular permeability, edema, inflammatory response, and platelet aggregation. The chain is Dermonecrotic toxin StSicTox-betaIB1i from Sicarius terrosus (Cave spider).